A 173-amino-acid chain; its full sequence is Beta-defensin 129 (173 aa).

Residues 1 to 19 form the signal peptide; sequence MKLLFPIFASLMLQYKVNT. Intrachain disulfides connect Cys-27–Cys-53, Cys-34–Cys-48, and Cys-38–Cys-54. The interval 144 to 173 is disordered; the sequence is STKSNIKESRDSATASPPPAPPPPNTLPTP. Over residues 159–173 the composition is skewed to pro residues; the sequence is SPPPAPPPPNTLPTP.

Belongs to the beta-defensin family.

Its subcellular location is the secreted. Has antibacterial activity. In Hylobates lar (Lar gibbon), this protein is Beta-defensin 129 (DEFB129).